Consider the following 861-residue polypeptide: DNA mismatch repair protein MutS (861 aa).

618-625 contacts ATP; that stretch reads GPNMGGKS.

This sequence belongs to the DNA mismatch repair MutS family.

Functionally, this protein is involved in the repair of mismatches in DNA. It is possible that it carries out the mismatch recognition step. This protein has a weak ATPase activity. The polypeptide is DNA mismatch repair protein MutS (Shewanella sp. (strain ANA-3)).